The sequence spans 277 residues: Cell wall protein PGA30 (277 aa).

An N-terminal signal peptide occupies residues 1–18; that stretch reads MKYFTIATVLTLASSALA. 2 N-linked (GlcNAc...) asparagine glycosylation sites follow: Asn129 and Asn178. The tract at residues 219-246 is disordered; sequence VLPSSSTEAPPKTSVAAPSTTAEAQTTA. Over residues 234 to 246 the composition is skewed to polar residues; the sequence is AAPSTTAEAQTTA. The GPI-anchor amidated glycine moiety is linked to residue Gly253. A propeptide spans 254 to 277 (removed in mature form); that stretch reads GANEIVGGGSMAIALAAAAIGLVI.

Belongs to the SRP1/TIP1 family. In terms of processing, the GPI-anchor is attached to the protein in the endoplasmic reticulum and serves to target the protein to the cell surface. There, the glucosamine-inositol phospholipid moiety is cleaved off and the GPI-modified mannoprotein is covalently attached via its lipidless GPI glycan remnant to the 1,6-beta-glucan of the outer cell wall layer.

It localises to the secreted. It is found in the cell wall. Its subcellular location is the membrane. Functionally, component of the cell wall involved in virulence which plays a role in the relationship between C.albicans and the host. In Candida albicans (strain SC5314 / ATCC MYA-2876) (Yeast), this protein is Cell wall protein PGA30 (PGA30).